We begin with the raw amino-acid sequence, 258 residues long: Acyl-[acyl-carrier-protein]--UDP-N-acetylglucosamine O-acyltransferase (258 aa).

The protein belongs to the transferase hexapeptide repeat family. LpxA subfamily. In terms of assembly, homotrimer.

Its subcellular location is the cytoplasm. It catalyses the reaction a (3R)-hydroxyacyl-[ACP] + UDP-N-acetyl-alpha-D-glucosamine = a UDP-3-O-[(3R)-3-hydroxyacyl]-N-acetyl-alpha-D-glucosamine + holo-[ACP]. Its pathway is glycolipid biosynthesis; lipid IV(A) biosynthesis; lipid IV(A) from (3R)-3-hydroxytetradecanoyl-[acyl-carrier-protein] and UDP-N-acetyl-alpha-D-glucosamine: step 1/6. Functionally, involved in the biosynthesis of lipid A, a phosphorylated glycolipid that anchors the lipopolysaccharide to the outer membrane of the cell. In Pseudomonas aeruginosa (strain LESB58), this protein is Acyl-[acyl-carrier-protein]--UDP-N-acetylglucosamine O-acyltransferase.